The chain runs to 457 residues: Secreted effector kinase SteC (457 aa).

K256 is a binding site for ATP.

It belongs to the protein kinase superfamily. Post-translationally, autophosphorylated.

Its subcellular location is the secreted. The protein localises to the host cytoplasm. Effector proteins function to alter host cell physiology and promote bacterial survival in host tissues. This protein is a kinase, which is required for SPI-2 T3SS-dependent F-actin meshwork formation in infected host cells. In Salmonella typhimurium (strain LT2 / SGSC1412 / ATCC 700720), this protein is Secreted effector kinase SteC (steC).